A 410-amino-acid polypeptide reads, in one-letter code: Dual-specificity RNA methyltransferase RlmN (410 aa).

The segment at 7–26 (VSSENLDGQQQSSSTPASPA) is disordered. Residues 15–26 (QQQSSSTPASPA) show a composition bias toward low complexity. Glu120 functions as the Proton acceptor in the catalytic mechanism. In terms of domain architecture, Radical SAM core spans 130–373 (TGSRKTLCIS…CTIRQTRGDD (244 aa)). The cysteines at positions 137 and 378 are disulfide-linked. [4Fe-4S] cluster is bound by residues Cys144, Cys148, and Cys151. Residues 200 to 201 (GE), Ser232, 254 to 256 (SLH), and Asn335 contribute to the S-adenosyl-L-methionine site. Cys378 acts as the S-methylcysteine intermediate in catalysis.

It belongs to the radical SAM superfamily. RlmN family. Requires [4Fe-4S] cluster as cofactor.

Its subcellular location is the cytoplasm. It carries out the reaction adenosine(2503) in 23S rRNA + 2 reduced [2Fe-2S]-[ferredoxin] + 2 S-adenosyl-L-methionine = 2-methyladenosine(2503) in 23S rRNA + 5'-deoxyadenosine + L-methionine + 2 oxidized [2Fe-2S]-[ferredoxin] + S-adenosyl-L-homocysteine. The catalysed reaction is adenosine(37) in tRNA + 2 reduced [2Fe-2S]-[ferredoxin] + 2 S-adenosyl-L-methionine = 2-methyladenosine(37) in tRNA + 5'-deoxyadenosine + L-methionine + 2 oxidized [2Fe-2S]-[ferredoxin] + S-adenosyl-L-homocysteine. Its function is as follows. Specifically methylates position 2 of adenine 2503 in 23S rRNA and position 2 of adenine 37 in tRNAs. m2A2503 modification seems to play a crucial role in the proofreading step occurring at the peptidyl transferase center and thus would serve to optimize ribosomal fidelity. This is Dual-specificity RNA methyltransferase RlmN from Acinetobacter baumannii (strain AB307-0294).